A 158-amino-acid chain; its full sequence is Cyclic pyranopterin monophosphate synthase (158 aa).

Residues 74-76 (MCH) and 112-113 (ME) contribute to the substrate site. Residue Asp-127 is part of the active site.

This sequence belongs to the MoaC family. Homohexamer; trimer of dimers.

The catalysed reaction is (8S)-3',8-cyclo-7,8-dihydroguanosine 5'-triphosphate = cyclic pyranopterin phosphate + diphosphate. The protein operates within cofactor biosynthesis; molybdopterin biosynthesis. In terms of biological role, catalyzes the conversion of (8S)-3',8-cyclo-7,8-dihydroguanosine 5'-triphosphate to cyclic pyranopterin monophosphate (cPMP). In Thermoanaerobacter sp. (strain X514), this protein is Cyclic pyranopterin monophosphate synthase.